The sequence spans 213 residues: Glutathione S-transferase DHAR2 (213 aa).

Cysteine 6 carries the post-translational modification S-glutathionyl cysteine. Positions 8 and 19 each coordinate glutathione. L-ascorbate contacts are provided by lysine 8 and aspartate 19. Residues 10-83 form the GST N-terminal domain; that stretch reads AVGAPDVLGD…DVIVGLLEEK (74 aa). S-glutathionyl cysteine is present on cysteine 20. Cysteine 20 acts as the Nucleophile in catalysis. The Glutathione-binding motif lies at 20 to 25; it reads CPFSQR. Lysine 47, valine 60, serine 73, histidine 160, and tryptophan 207 together coordinate glutathione. The GST C-terminal domain occupies 84–213; the sequence is YPEPSLKTPP…VAGWESKVNA (130 aa). L-ascorbate is bound at residue lysine 210.

The protein belongs to the GST superfamily. DHAR family. In terms of assembly, monomer. Post-translationally, spontaneous S-glutathionylation in the presence of oxidized glutathione (GSSG).

The protein localises to the cytoplasm. The protein resides in the cytosol. The catalysed reaction is RX + glutathione = an S-substituted glutathione + a halide anion + H(+). The enzyme catalyses L-dehydroascorbate + 2 glutathione = glutathione disulfide + L-ascorbate. In terms of biological role, displays a dual function. As a soluble protein, exhibits glutathione-dependent thiol transferase and dehydroascorbate (DHA) reductase activities. Exhibits glutathione-dependent thiol transferase and dehydroascorbate (DHA) reductase activities. Key component of the ascorbate recycling system. Involved in the redox homeostasis, especially in scavenging of ROS under oxidative stresses. Plays a role in ozone tolerance. This Arabidopsis thaliana (Mouse-ear cress) protein is Glutathione S-transferase DHAR2 (DHAR2).